A 329-amino-acid chain; its full sequence is Ubiquitin carboxyl-terminal hydrolase isozyme L5 (329 aa).

Positions glutamate 7–serine 225 constitute a UCH catalytic domain. Position 47 is an N6-succinyllysine (lysine 47). Cysteine 88 acts as the Nucleophile in catalysis. The residue at position 158 (lysine 158) is an N6-acetyllysine. The Proton donor role is filled by histidine 164. Lysine 289 carries the N6-succinyllysine modification. In terms of domain architecture, ULD spans asparagine 291–lysine 319. The interaction with ADRM1 stretch occupies residues valine 313–lysine 329.

It belongs to the peptidase C12 family. Component of the 19S (PA700) regulatory complex of the 26S proteasome. Interacts with ADRM1 and NFRKB. Component of the INO80 complex; specifically part of a complex module associated with N-terminus of INO80.

It localises to the cytoplasm. It is found in the nucleus. It carries out the reaction Thiol-dependent hydrolysis of ester, thioester, amide, peptide and isopeptide bonds formed by the C-terminal Gly of ubiquitin (a 76-residue protein attached to proteins as an intracellular targeting signal).. With respect to regulation, activated by ADRM1. Inhibited by interaction with NFRKB. Protease that specifically cleaves 'Lys-48'-linked polyubiquitin chains. Deubiquitinating enzyme associated with the 19S regulatory subunit of the 26S proteasome. Putative regulatory component of the INO80 complex; however is inactive in the INO80 complex and is activated by a transient interaction of the INO80 complex with the proteasome via ADRM1. The polypeptide is Ubiquitin carboxyl-terminal hydrolase isozyme L5 (Uchl5) (Mus musculus (Mouse)).